Here is a 254-residue protein sequence, read N- to C-terminus: MNISKTKSVSLVYEDLNKIVNEIVSKQFRSRHPDGDSDIDLQHLFSIINLKNPENDNDATNKQFVLTSIRDDTIHVNRKGDIMHGNLDMGGNFFVTNVNDKEMNPPDTHAATVGYVNRKIASYIPKANLNIICSQGFKGKKGITSRTDDIYKFFPAGVVLPTDAIIEKISLTTTNDTVENSKHKLTIKISDPLNSGDVQTETVFEKLGSQLYFSQQFRKPVGNKKISFQLDSFVDSAPVAIFAGESTLTLEISV.

This is an uncharacterized protein from Acheta domesticus (House cricket).